We begin with the raw amino-acid sequence, 460 residues long: MYPGKVYRGVKEIRGSLLIVDGIEEAAYDEVVKIYGKDSRERFGRVLETSIGQAVVQVLGDREGLETDTLLKFTGSTFKIRVSEDVIGRVFNGRFEPIDGLPPILSGELREITGEPINPISREYPHDFIQTGVSAIDGLFSMVRGQKLPIFSVSGLPHNLLAAQVARQATVRGEGEQFAVVFAGIGLRKTEAEFFLEQFRETGAIERLVAVLNMADDPAVERLMTPRIALTVAEYLAFDLDMHVLVIMSDMTNYCEALREVSSARGEIPGRLGYPGYMYSDLATIYERAGVIKGKKGSITLFPILTMPGGDLRHPIPDLTGYITEGQIFLSQEMYAQGIYPPINILPSLSRLMKSGIGPGKTREDHRYLADQLYDAYSRGVKARDLARIIGEIGLSERNRRFLKFAEEFENKFVNQGFYENRSIEETLDLGWQVLSILPEEELVRIPQKIIEKYHPKYRS.

The protein belongs to the ATPase alpha/beta chains family. In terms of assembly, has multiple subunits with at least A(3), B(3), C, D, E, F, H, I and proteolipid K(x).

It localises to the cell membrane. Functionally, component of the A-type ATP synthase that produces ATP from ADP in the presence of a proton gradient across the membrane. The B chain is a regulatory subunit. The protein is A-type ATP synthase subunit B of Thermofilum pendens (strain DSM 2475 / Hrk 5).